The following is a 423-amino-acid chain: Type II methyltransferase M.NlaIV (423 aa).

The region spanning 4–423 (IKFIDLFSGM…AVSERLLHTL (420 aa)) is the SAM-dependent MTase C5-type domain. C80 is a catalytic residue.

Belongs to the class I-like SAM-binding methyltransferase superfamily. C5-methyltransferase family.

The enzyme catalyses a 2'-deoxycytidine in DNA + S-adenosyl-L-methionine = a 5-methyl-2'-deoxycytidine in DNA + S-adenosyl-L-homocysteine + H(+). A methylase that recognizes the double-stranded sequence 5'-GGNNCC-3', methylates C-? on both strands, and protects the DNA from cleavage by the NlaIV endonuclease. This is Type II methyltransferase M.NlaIV (nlaIVM) from Neisseria lactamica.